The following is a 32-amino-acid chain: Photosystem I reaction center subunit XII (32 aa).

Residues 3–23 (SISDGQIVVALISAFIIVILA) form a helical membrane-spanning segment.

This sequence belongs to the PsaM family.

The protein resides in the plastid. It localises to the chloroplast thylakoid membrane. The polypeptide is Photosystem I reaction center subunit XII (Anthoceros angustus (Hornwort)).